The primary structure comprises 360 residues: C-C chemokine receptor type 4 (360 aa).

The Extracellular portion of the chain corresponds to 1 to 39; that stretch reads MNPTDIADTTLDESIYSNYYLYESIPKPCTKEGIKAFGE. The helical transmembrane segment at 40–67 threads the bilayer; that stretch reads LFLPPLYSLVFVFGLLGNSVVVLVLFKY. Over 68 to 77 the chain is Cytoplasmic; the sequence is KRLRSMTDVY. The chain crosses the membrane as a helical span at residues 78–98; sequence LLNLAISDLLFVFSLPFWGYY. Topologically, residues 99 to 111 are extracellular; that stretch reads AADQWVFGLGLCK. The cysteines at positions 110 and 187 are disulfide-linked. A helical membrane pass occupies residues 112-133; that stretch reads MISWMYLVGFYSGIFFVMLMSI. Residues 134–150 lie on the Cytoplasmic side of the membrane; that stretch reads DRYLAIVHAVFSLRART. A helical membrane pass occupies residues 151–175; it reads LTYGVITSLATWSVAVFASLPGFLF. The Extracellular portion of the chain corresponds to 176–206; sequence STCYTERNHTYCKTKYSLNSTTWKVLSSLEI. Residues N183 and N194 are each glycosylated (N-linked (GlcNAc...) asparagine). Residues 207–226 form a helical membrane-spanning segment; that stretch reads NILGLVIPLGIMLFCYSMII. Residues 227–242 lie on the Cytoplasmic side of the membrane; that stretch reads RTLQHCKNEKKNKAVK. A helical membrane pass occupies residues 243–267; that stretch reads MIFAVVVLFLGFWTPYNIVLFLETL. Residues 268–284 lie on the Extracellular side of the membrane; that stretch reads VELEVLQDCTFERYLDY. A helical transmembrane segment spans residues 285 to 308; it reads AIQATETLAFVHCCLNPIIYFFLG. Residues 309–360 lie on the Cytoplasmic side of the membrane; the sequence is EKFRKYILQLFKTCRGLFVLCQYCGLLQIYSADTPSSSYTQSTMDHDLHDAL.

It belongs to the G-protein coupled receptor 1 family. In natural killer cells, CCL22 binding induces phosphorylation on yet undefined Ser/Thr residues, most probably by beta-adrenergic receptor kinases 1 and 2. Predominantly expressed in the thymus, in peripheral blood leukocytes, including T-cells, mostly CD4+ cells, and basophils, and in platelets; at lower levels, in the spleen and in monocytes. Detected also in macrophages, IL-2-activated natural killer cells and skin-homing memory T-cells, mostly the ones expressing the cutaneous lymphocyte antigen (CLA). Expressed in brain microvascular and coronary artery endothelial cells.

It localises to the cell membrane. In terms of biological role, high affinity receptor for the C-C type chemokines CCL17/TARC, CCL22/MDC and CKLF isoform 1/CKLF1. The activity of this receptor is mediated by G(i) proteins which activate a phosphatidylinositol-calcium second messenger system. Can function as a chemoattractant homing receptor on circulating memory lymphocytes and as a coreceptor for some primary HIV-2 isolates. In the CNS, could mediate hippocampal-neuron survival. The chain is C-C chemokine receptor type 4 (CCR4) from Homo sapiens (Human).